The sequence spans 170 residues: Cyclic pyranopterin monophosphate synthase (170 aa).

Residues 75-77 (MCH) and 115-116 (ME) contribute to the substrate site. Residue Asp-130 is part of the active site.

It belongs to the MoaC family. In terms of assembly, homohexamer; trimer of dimers.

The enzyme catalyses (8S)-3',8-cyclo-7,8-dihydroguanosine 5'-triphosphate = cyclic pyranopterin phosphate + diphosphate. It functions in the pathway cofactor biosynthesis; molybdopterin biosynthesis. Its function is as follows. Catalyzes the conversion of (8S)-3',8-cyclo-7,8-dihydroguanosine 5'-triphosphate to cyclic pyranopterin monophosphate (cPMP). In Bacillus subtilis (strain 168), this protein is Cyclic pyranopterin monophosphate synthase.